Here is a 271-residue protein sequence, read N- to C-terminus: Putative pyruvate, phosphate dikinase regulatory protein 2 (271 aa).

Residue 151 to 158 participates in ADP binding; the sequence is GVSRTSKT.

It belongs to the pyruvate, phosphate/water dikinase regulatory protein family. PDRP subfamily.

The catalysed reaction is N(tele)-phospho-L-histidyl/L-threonyl-[pyruvate, phosphate dikinase] + ADP = N(tele)-phospho-L-histidyl/O-phospho-L-threonyl-[pyruvate, phosphate dikinase] + AMP + H(+). The enzyme catalyses N(tele)-phospho-L-histidyl/O-phospho-L-threonyl-[pyruvate, phosphate dikinase] + phosphate + H(+) = N(tele)-phospho-L-histidyl/L-threonyl-[pyruvate, phosphate dikinase] + diphosphate. Bifunctional serine/threonine kinase and phosphorylase involved in the regulation of the pyruvate, phosphate dikinase (PPDK) by catalyzing its phosphorylation/dephosphorylation. In Staphylococcus haemolyticus (strain JCSC1435), this protein is Putative pyruvate, phosphate dikinase regulatory protein 2.